The primary structure comprises 459 residues: Glutathione reductase (459 aa).

S14, G15, E34, T41, C42, K50, and A114 together coordinate FAD. S14 is a binding site for glutathione. Residues C42 and C47 are joined by a disulfide bond. NADP(+) is bound by residues I177, E180, R197, K203, and G262. Positions 313 and 321 each coordinate FAD. Residue R329 coordinates glutathione. A351 contacts NADP(+). An FAD-binding site is contributed by H448. Catalysis depends on H448, which acts as the Proton acceptor.

This sequence belongs to the class-I pyridine nucleotide-disulfide oxidoreductase family. In terms of assembly, homodimer. FAD is required as a cofactor.

The protein localises to the cytoplasm. The catalysed reaction is 2 glutathione + NADP(+) = glutathione disulfide + NADPH + H(+). In terms of biological role, catalyzes the reduction of glutathione disulfide (GSSG) to reduced glutathione (GSH). Constitutes the major mechanism to maintain a high GSH:GSSG ratio in the cytosol. The polypeptide is Glutathione reductase (gor) (Nostoc sp. (strain PCC 7120 / SAG 25.82 / UTEX 2576)).